Reading from the N-terminus, the 585-residue chain is Protein FAM151A (585 aa).

A helical transmembrane segment spans residues 14–34 (WVFAGITCVSVVVIAAIVLAI).

Belongs to the menorin family.

The protein resides in the membrane. The chain is Protein FAM151A (FAM151A) from Homo sapiens (Human).